A 76-amino-acid polypeptide reads, in one-letter code: Frizzled-3 (76 aa).

The Cytoplasmic portion of the chain corresponds to 1 to 5 (YPERP). Residues 6–26 (IIFYAVCYMMVSLIFFIGFLL) traverse the membrane as a helical segment. At 27–54 (EDRVACNASSPAQYKASTVTQGSHNKAC) the chain is on the extracellular side. N33 carries N-linked (GlcNAc...) asparagine glycosylation. A helical transmembrane segment spans residues 55 to 75 (TMLFMVLYFFTMAGSVWWVIL). Residue R76 is a topological domain, cytoplasmic.

The protein belongs to the G-protein coupled receptor Fz/Smo family.

It localises to the membrane. The protein resides in the cell membrane. The protein localises to the cell surface. It is found in the apical cell membrane. Functionally, receptor for Wnt proteins. Most of frizzled receptors are coupled to the beta-catenin canonical signaling pathway, which leads to the activation of disheveled proteins, inhibition of GSK-3 kinase, nuclear accumulation of beta-catenin and activation of Wnt target genes. A second signaling pathway involving PKC and calcium fluxes has been seen for some family members, but it is not yet clear if it represents a distinct pathway or if it can be integrated in the canonical pathway, as PKC seems to be required for Wnt-mediated inactivation of GSK-3 kinase. Both pathways seem to involve interactions with G-proteins. May be involved in transduction and intercellular transmission of polarity information during tissue morphogenesis and/or in differentiated tissues. Plays a role in controlling early axon growth and guidance processes necessary for the formation of a subset of central and peripheral major fiber tracts. Involved in the migration of cranial neural crest cells. May also be implicated in the transmission of sensory information from the trunk and limbs to the brain. Controls commissural sensory axons guidance after midline crossing along the anterior-posterior axis in the developing spinal cord in a Wnt-dependent signaling pathway. Together with FZD6, is involved in the neural tube closure and plays a role in the regulation of the establishment of planar cell polarity (PCP). Promotes neurogenesis by maintaining sympathetic neuroblasts within the cell cycle in a beta-catenin-dependent manner. This chain is Frizzled-3 (FZD3), found in Gallus gallus (Chicken).